A 356-amino-acid polypeptide reads, in one-letter code: MAKQPGLDFQSAKGGLGELKRRLLFVIGALIVFRIGSFIPIPGIDATVLAKLLEQQRGTIIEMFNMFSGGALSRASIFALGIMPYISASIIIQLLTVVHPALAEVKKEGEAGRRKISQYTRYGTLVLAIFQSIGIATGLPNMPGMQGLVMNPGFAFYFTAVVSLVTGTMFLMWLGEQITERGIGNGISIIIFAGIVAGLPPAVAHTIEQARQGDLHFLLLLLVAVLVFAVTFFVVFIERGQRRIVVNYAKRQQGRRVYAAQSTHLPLKVNMAGVIPAIFASSIILFPATIASWFGGGTGWNWLTTVSLYLQPGQPLYVLLYASAIIFFCFFYTALVFNPRETADNLKKSGAFVPGI.

8 consecutive transmembrane segments (helical) span residues 24-44 (LFVIGALIVFRIGSFIPIPGI), 77-97 (IFALGIMPYISASIIIQLLTV), 125-145 (LVLAIFQSIGIATGLPNMPGM), 154-174 (FAFYFTAVVSLVTGTMFLMWL), 183-203 (IGNGISIIIFAGIVAGLPPAV), 217-237 (FLLLLLVAVLVFAVTFFVVFI), 274-294 (VIPAIFASSIILFPATIASWF), and 317-337 (YVLLYASAIIFFCFFYTALVF).

Belongs to the SecY/SEC61-alpha family. As to quaternary structure, component of the Sec protein translocase complex. Heterotrimer consisting of SecY, SecE and SecG subunits. The heterotrimers can form oligomers, although 1 heterotrimer is thought to be able to translocate proteins. Interacts with the ribosome. Interacts with SecDF, and other proteins may be involved. Interacts with SecA.

It is found in the cell membrane. Its function is as follows. The central subunit of the protein translocation channel SecYEG. Consists of two halves formed by TMs 1-5 and 6-10. These two domains form a lateral gate at the front which open onto the bilayer between TMs 2 and 7, and are clamped together by SecE at the back. The channel is closed by both a pore ring composed of hydrophobic SecY resides and a short helix (helix 2A) on the extracellular side of the membrane which forms a plug. The plug probably moves laterally to allow the channel to open. The ring and the pore may move independently. The chain is Protein translocase subunit SecY from Buchnera aphidicola subsp. Acyrthosiphon kondoi (Acyrthosiphon kondoi symbiotic bacterium).